A 504-amino-acid polypeptide reads, in one-letter code: Cystathionine beta-synthase (504 aa).

Cys-12 and His-23 together coordinate heme. Lys-78 is modified (N6-(pyridoxal phosphate)lysine). Residues Asn-108, Gly-215 to Thr-219, and Ser-307 each bind pyridoxal 5'-phosphate. CBS domains are found at residues Leu-375–Cys-434 and Met-442–Ser-498.

Belongs to the cysteine synthase/cystathionine beta-synthase family. Homodimer. Requires pyridoxal 5'-phosphate as cofactor.

It carries out the reaction L-homocysteine + L-serine = L,L-cystathionine + H2O. It functions in the pathway amino-acid biosynthesis; L-cysteine biosynthesis; L-cysteine from L-homocysteine and L-serine: step 1/2. With respect to regulation, has no response to S-adenosyl-methionine/AdoMet, unlike mammalian orthologs. Binds non-covalently to a heme group that may control the redox sensitivity of the enzyme. Functionally, hydro-lyase catalyzing the first step of the transsulfuration pathway, where the hydroxyl group of L-serine is displaced by L-homocysteine in a beta-replacement reaction to form L-cystathionine, the precursor of L-cysteine. This Apis mellifera (Honeybee) protein is Cystathionine beta-synthase.